The sequence spans 187 residues: MRLVLLGPPGSGKGTQAARLKDTFQIPHISTGDLLRAEVAAGSPLGVKAKEVMARGDLVSDEILLGMLEARLGQADVANGFILDGYPRNVAQANALDSLLSKIGQPLDAVVQLDVASELLVERIAGRAKAEGREDDNPESVRKRLQVYTDSTAPVIGFYEQRGKLARVDGVGSLDEVLKRIGQALGR.

Residue 10–15 participates in ATP binding; sequence GSGKGT. The interval 30 to 59 is NMP; it reads STGDLLRAEVAAGSPLGVKAKEVMARGDLV. AMP contacts are provided by residues threonine 31, arginine 36, 57-59, 85-88, and glutamine 92; these read DLV and GYPR. Residues 126-136 are LID; that stretch reads GRAKAEGREDD. Residue arginine 127 participates in ATP binding. AMP-binding residues include arginine 133 and arginine 144. Residue glycine 172 participates in ATP binding.

This sequence belongs to the adenylate kinase family. As to quaternary structure, monomer.

The protein localises to the cytoplasm. The enzyme catalyses AMP + ATP = 2 ADP. The protein operates within purine metabolism; AMP biosynthesis via salvage pathway; AMP from ADP: step 1/1. In terms of biological role, catalyzes the reversible transfer of the terminal phosphate group between ATP and AMP. Plays an important role in cellular energy homeostasis and in adenine nucleotide metabolism. The protein is Adenylate kinase of Xanthomonas campestris pv. campestris (strain B100).